A 475-amino-acid polypeptide reads, in one-letter code: Ribulose bisphosphate carboxylase large chain (475 aa).

Positions 1–2 (MS) are excised as a propeptide. P3 bears the N-acetylproline mark. Position 14 is an N6,N6,N6-trimethyllysine (K14). Positions 123 and 173 each coordinate substrate. K175 (proton acceptor) is an active-site residue. K177 serves as a coordination point for substrate. Residues K201, D203, and E204 each contribute to the Mg(2+) site. The residue at position 201 (K201) is an N6-carboxylysine. The active-site Proton acceptor is H294. Positions 295, 327, and 379 each coordinate substrate.

The protein belongs to the RuBisCO large chain family. Type I subfamily. As to quaternary structure, heterohexadecamer of 8 large chains and 8 small chains; disulfide-linked. The disulfide link is formed within the large subunit homodimers. The cofactor is Mg(2+). Post-translationally, the disulfide bond which can form in the large chain dimeric partners within the hexadecamer appears to be associated with oxidative stress and protein turnover.

The protein localises to the plastid. It is found in the chloroplast. The catalysed reaction is 2 (2R)-3-phosphoglycerate + 2 H(+) = D-ribulose 1,5-bisphosphate + CO2 + H2O. It carries out the reaction D-ribulose 1,5-bisphosphate + O2 = 2-phosphoglycolate + (2R)-3-phosphoglycerate + 2 H(+). RuBisCO catalyzes two reactions: the carboxylation of D-ribulose 1,5-bisphosphate, the primary event in carbon dioxide fixation, as well as the oxidative fragmentation of the pentose substrate in the photorespiration process. Both reactions occur simultaneously and in competition at the same active site. The protein is Ribulose bisphosphate carboxylase large chain of Quercus rubra (Northern red oak).